A 620-amino-acid polypeptide reads, in one-letter code: Kelch-like protein 32 (620 aa).

A BTB domain is found at 42–109; that stretch reads CDITLIAEEQ…AYTGQILLEP (68 aa). Kelch repeat units follow at residues 290–346, 347–398, 399–446, 447–494, 496–547, and 549–599; these read TLYI…VMGD, FLFV…AMEE, YLYA…VADG, LLWI…AVQR, LYVL…VHNG, and IYLV…FLPA.

This Homo sapiens (Human) protein is Kelch-like protein 32 (KLHL32).